A 99-amino-acid chain; its full sequence is Large ribosomal subunit protein bL27 (99 aa).

Residues 1–10 (MKLIFDIQLF) constitute a propeptide that is removed on maturation.

This sequence belongs to the bacterial ribosomal protein bL27 family. The N-terminus is cleaved by ribosomal processing cysteine protease Prp.

The sequence is that of Large ribosomal subunit protein bL27 from Caldicellulosiruptor bescii (strain ATCC BAA-1888 / DSM 6725 / KCTC 15123 / Z-1320) (Anaerocellum thermophilum).